A 775-amino-acid polypeptide reads, in one-letter code: Venom dipeptidyl peptidase 4 (775 aa).

Positions Met-1–Gly-23 are cleaved as a signal peptide. Asn-68 and Asn-239 each carry an N-linked (GlcNAc...) asparagine glycan. 2 disulfides stabilise this stretch: Cys-450–Cys-453 and Cys-463–Cys-481. 4 N-linked (GlcNAc...) asparagine glycosylation sites follow: Asn-473, Asn-505, Asn-578, and Asn-631. Ser-639 (charge relay system) is an active-site residue. A disulfide bond links Cys-659 and Cys-770. N-linked (GlcNAc...) asparagine glycosylation is found at Asn-689 and Asn-694. Residues Asp-718 and His-750 each act as charge relay system in the active site.

Belongs to the peptidase S9B family. DPPIV subfamily. In terms of tissue distribution, expressed by the venom duct.

It localises to the secreted. The enzyme catalyses Release of an N-terminal dipeptide, Xaa-Yaa-|-Zaa-, from a polypeptide, preferentially when Yaa is Pro, provided Zaa is neither Pro nor hydroxyproline.. Its activity is regulated as follows. Inhibited by diprotin A. Its function is as follows. Venom dipeptidyl-peptidase which removes N-terminal dipeptides sequentially from polypeptides having unsubstituted N-termini provided that the penultimate residue is proline. May process promelittin into its active form and/or modulate the chemotactic activity of immune cells after the insect sting. In Apis mellifera (Honeybee), this protein is Venom dipeptidyl peptidase 4.